A 386-amino-acid chain; its full sequence is uncharacterized protein (386 aa).

Belongs to the mimivirus L17x/L18x family.

This is an uncharacterized protein from Acanthamoeba polyphaga mimivirus (APMV).